Consider the following 381-residue polypeptide: Formate dehydrogenase, mitochondrial (381 aa).

The transit peptide at 1–25 (MAMSRVASTAARAITSPSSLVFTRE) directs the protein to the mitochondrion. Substrate is bound by residues isoleucine 125 and asparagine 149. Residues threonine 150, 204-205 (RI), aspartate 224, 259-263 (PLTEK), asparagine 285, aspartate 311, and 335-338 (HISG) contribute to the NAD(+) site.

It belongs to the D-isomer specific 2-hydroxyacid dehydrogenase family. FDH subfamily. Homodimer. As to expression, found at high levels in developing tubers, at intermediate level in stems, veins, stolons, and stamens, and at low level in leaves and roots.

It is found in the mitochondrion. It carries out the reaction formate + NAD(+) = CO2 + NADH. In terms of biological role, catalyzes the NAD(+)-dependent oxidation of formate to carbon dioxide. Involved in the cell stress response. Involved in formate-dependent oxygen uptake coupled to ATP synthesis. This chain is Formate dehydrogenase, mitochondrial, found in Solanum tuberosum (Potato).